Consider the following 263-residue polypeptide: H-2 class II histocompatibility antigen, A-K beta chain (263 aa).

Positions 1–27 (MALQIPSLLLLAAVVVLTVLSSPGTEG) are cleaved as a signal peptide. The beta-1 stretch occupies residues 28 to 120 (GNSERHFVHQ…TETPTSLRRL (93 aa)). Topologically, residues 28 to 224 (GNSERHFVHQ…RAQSESARSK (197 aa)) are extracellular. Cystine bridges form between Cys42–Cys104 and Cys143–Cys199. An N-linked (GlcNAc...) asparagine glycan is attached at Asn46. Residues 121-214 (EQPSVVISLS…SLKSPITVEW (94 aa)) form a beta-2 region. The 89-residue stretch at 123-211 (PSVVISLSRT…EHPSLKSPIT (89 aa)) folds into the Ig-like C1-type domain. Positions 215–224 (RAQSESARSK) are connecting peptide. Residues 225 to 245 (MLSGIGGCVLGVIFLGLGLFI) form a helical membrane-spanning segment. Over 246 to 263 (RHRSQKGPRGPPPAGLLQ) the chain is Cytoplasmic.

Belongs to the MHC class II family. Post-translationally, ubiquitinated in immature dendritic cells leading to down-regulation of MHC class II.

It is found in the membrane. In Mus musculus (Mouse), this protein is H-2 class II histocompatibility antigen, A-K beta chain (H2-Ab1).